A 96-amino-acid chain; its full sequence is uncharacterized protein (96 aa).

Positions 1-21 (MLASVLILGAIAVGSAIPTIA) are cleaved as a signal peptide.

This is an uncharacterized protein from Archaeoglobus fulgidus (strain ATCC 49558 / DSM 4304 / JCM 9628 / NBRC 100126 / VC-16).